Here is a 78-residue protein sequence, read N- to C-terminus: Large ribosomal subunit protein bL28 (78 aa).

It belongs to the bacterial ribosomal protein bL28 family.

This Thioalkalivibrio sulfidiphilus (strain HL-EbGR7) protein is Large ribosomal subunit protein bL28.